Here is a 161-residue protein sequence, read N- to C-terminus: Probable chemoreceptor glutamine deamidase CheD (161 aa).

Belongs to the CheD family.

The enzyme catalyses L-glutaminyl-[protein] + H2O = L-glutamyl-[protein] + NH4(+). Its function is as follows. Probably deamidates glutamine residues to glutamate on methyl-accepting chemotaxis receptors (MCPs), playing an important role in chemotaxis. The chain is Probable chemoreceptor glutamine deamidase CheD from Syntrophomonas wolfei subsp. wolfei (strain DSM 2245B / Goettingen).